The following is a 277-amino-acid chain: Large ribosomal subunit protein uL2 (277 aa).

Basic residues-rich tracts occupy residues R210 to Q219 and T259 to K277. The interval R210–K277 is disordered.

This sequence belongs to the universal ribosomal protein uL2 family. Part of the 50S ribosomal subunit. Forms a bridge to the 30S subunit in the 70S ribosome.

Its function is as follows. One of the primary rRNA binding proteins. Required for association of the 30S and 50S subunits to form the 70S ribosome, for tRNA binding and peptide bond formation. It has been suggested to have peptidyltransferase activity; this is somewhat controversial. Makes several contacts with the 16S rRNA in the 70S ribosome. The polypeptide is Large ribosomal subunit protein uL2 (Ligilactobacillus salivarius (strain UCC118) (Lactobacillus salivarius)).